We begin with the raw amino-acid sequence, 422 residues long: Trigger factor (422 aa).

A PPIase FKBP-type domain is found at 158 to 242; sequence GDFAVVSLES…VKGLRKKELP (85 aa).

It belongs to the FKBP-type PPIase family. Tig subfamily.

Its subcellular location is the cytoplasm. The catalysed reaction is [protein]-peptidylproline (omega=180) = [protein]-peptidylproline (omega=0). Its function is as follows. Involved in protein export. Acts as a chaperone by maintaining the newly synthesized protein in an open conformation. Functions as a peptidyl-prolyl cis-trans isomerase. This Solibacter usitatus (strain Ellin6076) protein is Trigger factor.